The following is a 127-amino-acid chain: Aspartate 1-decarboxylase (127 aa).

Ser-25 serves as the catalytic Schiff-base intermediate with substrate; via pyruvic acid. A Pyruvic acid (Ser) modification is found at Ser-25. Thr-57 contributes to the substrate binding site. Residue Tyr-58 is the Proton donor of the active site. 73–75 (GAA) provides a ligand contact to substrate.

It belongs to the PanD family. As to quaternary structure, heterooctamer of four alpha and four beta subunits. The cofactor is pyruvate. Post-translationally, is synthesized initially as an inactive proenzyme, which is activated by self-cleavage at a specific serine bond to produce a beta-subunit with a hydroxyl group at its C-terminus and an alpha-subunit with a pyruvoyl group at its N-terminus.

The protein localises to the cytoplasm. It catalyses the reaction L-aspartate + H(+) = beta-alanine + CO2. The protein operates within cofactor biosynthesis; (R)-pantothenate biosynthesis; beta-alanine from L-aspartate: step 1/1. Catalyzes the pyruvoyl-dependent decarboxylation of aspartate to produce beta-alanine. The protein is Aspartate 1-decarboxylase of Listeria monocytogenes serotype 4b (strain F2365).